The primary structure comprises 145 residues: MNGRVDYLVTEEEINLTRGPSGLGFNIVGGTDQQYVSNDSGIFVSRIKENGAAALDGRLQEGDKILSVNGQDLKNLLHQDAVDLFRNAGYAVSLRVQHRLQVQNGPIGPQGEGEPSGIPIAMVLVPVFALTMVAAWAFMRYRQRL.

At 1-117 (MNGRVDYLVT…GPQGEGEPSG (117 aa)) the chain is on the cytoplasmic side. Positions 13 to 100 (EINLTRGPSG…AVSLRVQHRL (88 aa)) constitute a PDZ domain. A helical; Anchor for type IV membrane protein transmembrane segment spans residues 118–138 (IPIAMVLVPVFALTMVAAWAF). Residues 139–145 (MRYRQRL) lie on the Mitochondrial intermembrane side of the membrane.

Binds (via the PDZ domain) to isoform 2A of SYNJ2 (via the unique motif in the C-terminus). Interacts (via C-terminus) with RALBP1. Interacts (via PDZ domain) with ACVR2A (via C-terminus) and ACVR2B (via C-terminus). Forms a ternary complex with ACVR2A and RALBP1. Interacts with MAPK12. Interacts with DLL1; enhances DLL1 protein stability, and promotes notch signaling in endothelial cells.

It is found in the mitochondrion outer membrane. It localises to the cytoplasm. The protein resides in the perinuclear region. Functionally, regulates endocytosis of activin type 2 receptor kinases through the Ral/RALBP1-dependent pathway and may be involved in suppression of activin-induced signal transduction. This chain is Synaptojanin-2-binding protein, found in Bos taurus (Bovine).